Here is a 476-residue protein sequence, read N- to C-terminus: Proline--tRNA ligase 2 (476 aa).

It belongs to the class-II aminoacyl-tRNA synthetase family. ProS type 3 subfamily. In terms of assembly, homodimer.

The protein resides in the cytoplasm. It carries out the reaction tRNA(Pro) + L-proline + ATP = L-prolyl-tRNA(Pro) + AMP + diphosphate. Functionally, catalyzes the attachment of proline to tRNA(Pro) in a two-step reaction: proline is first activated by ATP to form Pro-AMP and then transferred to the acceptor end of tRNA(Pro). This is Proline--tRNA ligase 2 from Bacillus thuringiensis subsp. konkukian (strain 97-27).